The chain runs to 444 residues: Forkhead box protein F2 (444 aa).

A disordered region spans residues 32–98 (PAAAAAAAAA…KKASSGLRRP (67 aa)). The segment covering 34–75 (AAAAAAAAPETTSSSSSSSSASCASSSSSSNSASAPSAACKS) has biased composition (low complexity). Residues 76-87 (AGGGGAGAGSGG) are compositionally biased toward gly residues. Residues 99–190 (EKPPYSYIAL…EFMFEEGSFR (92 aa)) constitute a DNA-binding region (fork-head). 2 disordered regions span residues 256-323 (GAGA…SPAM) and 338-367 (AHWS…SAGL). Positions 263–274 (AHPHHHHHHHVP) are enriched in basic residues. Over residues 293 to 308 (GPGGVGAAGGGGGGDY) the composition is skewed to gly residues. Low complexity predominate over residues 309–323 (GPDSSSSPVPSSPAM).

Interacts with the transcription factors TBP and TFIIB. In terms of tissue distribution, lung and placenta. Predominantly expressed in gastrointestinal tract including stomach.

It localises to the nucleus. In terms of biological role, probable transcription activator for a number of lung-specific genes. Mediates up-regulation of the E3 ligase IRF2BPL and drives ubiquitination and degradation of CTNNB1. The protein is Forkhead box protein F2 (FOXF2) of Homo sapiens (Human).